A 166-amino-acid chain; its full sequence is MDVARFLNNNAILHDDCLKSPIVCLERLATEFNAWLTSILLSLEIVFFNEAFIISVISLVILQSDWVVMLSNISPMDTVHVPAFVIILSKMLYGIAQKISSPVISPLSINLLRLFLNALFSGEKISVSIISLIVYAEKIPRVSILSKILIGSESQIMVSSPSGDPA.

This is an uncharacterized protein from Homo sapiens (Human).